The sequence spans 1381 residues: Major capsid protein (1381 aa).

The protein belongs to the herpesviridae major capsid protein family. Homomultimer. Makes the hexons and eleven out of twelve pentons. Interacts with triplex proteins 1/TRX1 and 2/TRX2; adjacent capsomers are linked together in groups of three by triplexes, heterotrimeric complexes composed of one molecule of TRX1 and two molecules of TRX2. Interacts with scaffold protein; this interaction allows efficient MCP transport to the host nucleus. Interacts with capsid vertex component 2/CVC2. Interacts with the small capsomere-interacting protein/SCP.

The protein resides in the virion. The protein localises to the host nucleus. Functionally, self-assembles to form an icosahedral capsid with a T=16 symmetry, about 200 nm in diameter, and consisting of 150 hexons and 12 pentons (total of 162 capsomers). Hexons form the edges and faces of the capsid and are each composed of six MCP molecules. In contrast, one penton is found at each of the 12 vertices. Eleven of the pentons are MCP pentamers, while the last vertex is occupied by the portal complex. The capsid is surrounded by a layer of proteinaceous material designated the tegument which, in turn, is enclosed in an envelope of host cell-derived lipids containing virus-encoded glycoproteins. The sequence is that of Major capsid protein from Epstein-Barr virus (strain AG876) (HHV-4).